Reading from the N-terminus, the 88-residue chain is Small ribosomal subunit protein uS15 (88 aa).

It belongs to the universal ribosomal protein uS15 family. In terms of assembly, part of the 30S ribosomal subunit. Forms a bridge to the 50S subunit in the 70S ribosome, contacting the 23S rRNA.

One of the primary rRNA binding proteins, it binds directly to 16S rRNA where it helps nucleate assembly of the platform of the 30S subunit by binding and bridging several RNA helices of the 16S rRNA. In terms of biological role, forms an intersubunit bridge (bridge B4) with the 23S rRNA of the 50S subunit in the ribosome. This chain is Small ribosomal subunit protein uS15, found in Francisella tularensis subsp. tularensis (strain FSC 198).